We begin with the raw amino-acid sequence, 197 residues long: Protein RESISTANCE TO PHYTOPHTHORA 1, chloroplastic (197 aa).

Residues 1–52 (MSWSLCSTHGVSSSIALTYGFRHRRRSTFRIFATSDGLEPKDDPPESPLPSS) constitute a chloroplast transit peptide. The segment at 35–56 (SDGLEPKDDPPESPLPSSSSAL) is disordered. The next 4 helical transmembrane spans lie at 93 to 113 (FEVQ…NLLF), 120 to 140 (LWRL…LRAR), 150 to 170 (LNYL…FWKS), and 173 to 193 (LVWS…LGWL).

It localises to the plastid. The protein localises to the chloroplast. It is found in the membrane. Plays a positive role in the immune response to the oomycetes P.brassicae, including induced oxidative burst (e.g. H(2)O(2)) and enhanced expression of defense-related genes. The sequence is that of Protein RESISTANCE TO PHYTOPHTHORA 1, chloroplastic from Arabidopsis thaliana (Mouse-ear cress).